Consider the following 347-residue polypeptide: GMP reductase (347 aa).

108–131 contributes to the NADP(+) binding site; it reads TDFEKTKQILIANPALNFLCIDVA. Positions 181 and 183 each coordinate K(+). Residue cysteine 186 is the Thioimidate intermediate of the active site. 216-239 is an NADP(+) binding site; the sequence is IISDGGCTMPGDVAKAFGGGADFV.

This sequence belongs to the IMPDH/GMPR family. GuaC type 1 subfamily. As to quaternary structure, homotetramer.

It catalyses the reaction IMP + NH4(+) + NADP(+) = GMP + NADPH + 2 H(+). Functionally, catalyzes the irreversible NADPH-dependent deamination of GMP to IMP. It functions in the conversion of nucleobase, nucleoside and nucleotide derivatives of G to A nucleotides, and in maintaining the intracellular balance of A and G nucleotides. The sequence is that of GMP reductase from Enterobacter sp. (strain 638).